The primary structure comprises 284 residues: 4-diphosphocytidyl-2-C-methyl-D-erythritol kinase (284 aa).

Residue Lys22 is part of the active site. Position 104 to 114 (104 to 114 (PVGAGLGGASS)) interacts with ATP. Residue Asp146 is part of the active site.

The protein belongs to the GHMP kinase family. IspE subfamily.

It carries out the reaction 4-CDP-2-C-methyl-D-erythritol + ATP = 4-CDP-2-C-methyl-D-erythritol 2-phosphate + ADP + H(+). It functions in the pathway isoprenoid biosynthesis; isopentenyl diphosphate biosynthesis via DXP pathway; isopentenyl diphosphate from 1-deoxy-D-xylulose 5-phosphate: step 3/6. Functionally, catalyzes the phosphorylation of the position 2 hydroxy group of 4-diphosphocytidyl-2C-methyl-D-erythritol. In Hydrogenobaculum sp. (strain Y04AAS1), this protein is 4-diphosphocytidyl-2-C-methyl-D-erythritol kinase.